The following is a 91-amino-acid chain: UPF0512 protein M (91 aa).

This sequence belongs to the UPF0512 family.

The chain is UPF0512 protein M from Dictyostelium discoideum (Social amoeba).